A 378-amino-acid polypeptide reads, in one-letter code: Squalene methyltransferase 1 (378 aa).

Residues 17 to 37 (LLTWKGVAGLVVAITLGYLII) traverse the membrane as a helical segment.

This sequence belongs to the class I-like SAM-binding methyltransferase superfamily. Erg6/SMT family.

It is found in the microsome membrane. It carries out the reaction squalene + 2 S-adenosyl-L-methionine = 3,22-dimethyl-1,2,23,24-tetradehydro-2,3,22,23-tetrahydrosqualene + 2 S-adenosyl-L-homocysteine + 2 H(+). Its function is as follows. Converts squalene to mono- and dimethyl derivatives, but not to tri- and tetramethylated products. Unable to methylate cycloartenol, zymosterol or lanosterol. Methylates both C-3 and C22 positions, but only C-3 position in monomethylated products. Produces mainly dimethylated squalene. This Botryococcus braunii (Green alga) protein is Squalene methyltransferase 1 (TMT-1).